The sequence spans 193 residues: Ion-translocating oxidoreductase complex subunit A (193 aa).

6 helical membrane-spanning segments follow: residues 5 to 25, 39 to 59, 72 to 92, 102 to 122, 134 to 154, and 170 to 190; these read LLLL…FLGL, VGMG…AYLV, LSTL…EMVI, ILGI…LALL, VVYG…FASL, and IAIG…FTGL.

It belongs to the NqrDE/RnfAE family. The complex is composed of six subunits: RnfA, RnfB, RnfC, RnfD, RnfE and RnfG.

Its subcellular location is the cell inner membrane. In terms of biological role, part of a membrane-bound complex that couples electron transfer with translocation of ions across the membrane. The chain is Ion-translocating oxidoreductase complex subunit A from Tolumonas auensis (strain DSM 9187 / NBRC 110442 / TA 4).